Here is a 336-residue protein sequence, read N- to C-terminus: Protein-glutamate methylesterase/protein-glutamine glutaminase 1 (336 aa).

In terms of domain architecture, Response regulatory spans 2–119 (KIAIVNDMPL…GNPQEAAAPL (118 aa)). At D53 the chain carries 4-aspartylphosphate. The 190-residue stretch at 147–336 (TASRQRLVAI…APRLLEIFPK (190 aa)) folds into the CheB-type methylesterase domain. Residues S159, H186, and D279 contribute to the active site.

This sequence belongs to the CheB family. Phosphorylated by CheA. Phosphorylation of the N-terminal regulatory domain activates the methylesterase activity.

It localises to the cytoplasm. The enzyme catalyses [protein]-L-glutamate 5-O-methyl ester + H2O = L-glutamyl-[protein] + methanol + H(+). It catalyses the reaction L-glutaminyl-[protein] + H2O = L-glutamyl-[protein] + NH4(+). Functionally, involved in chemotaxis. Part of a chemotaxis signal transduction system that modulates chemotaxis in response to various stimuli. Catalyzes the demethylation of specific methylglutamate residues introduced into the chemoreceptors (methyl-accepting chemotaxis proteins or MCP) by CheR. Also mediates the irreversible deamidation of specific glutamine residues to glutamic acid. This Pseudomonas fluorescens (strain Pf0-1) protein is Protein-glutamate methylesterase/protein-glutamine glutaminase 1.